The chain runs to 577 residues: Proline--tRNA ligase (577 aa).

The protein belongs to the class-II aminoacyl-tRNA synthetase family. ProS type 1 subfamily. Homodimer.

Its subcellular location is the cytoplasm. It carries out the reaction tRNA(Pro) + L-proline + ATP = L-prolyl-tRNA(Pro) + AMP + diphosphate. Catalyzes the attachment of proline to tRNA(Pro) in a two-step reaction: proline is first activated by ATP to form Pro-AMP and then transferred to the acceptor end of tRNA(Pro). As ProRS can inadvertently accommodate and process non-cognate amino acids such as alanine and cysteine, to avoid such errors it has two additional distinct editing activities against alanine. One activity is designated as 'pretransfer' editing and involves the tRNA(Pro)-independent hydrolysis of activated Ala-AMP. The other activity is designated 'posttransfer' editing and involves deacylation of mischarged Ala-tRNA(Pro). The misacylated Cys-tRNA(Pro) is not edited by ProRS. In Chlamydia felis (strain Fe/C-56) (Chlamydophila felis), this protein is Proline--tRNA ligase.